We begin with the raw amino-acid sequence, 715 residues long: ATP-dependent zinc metalloprotease FtsH (715 aa).

Over 1-10 the chain is Cytoplasmic; it reads MKNKNRGFFR. Residues 11–31 traverse the membrane as a helical segment; sequence SSLSYAFVILAVIFLIYSFFG. Residues 32–137 are Extracellular-facing; sequence RSDGSVKHLS…KPAASNFWGS (106 aa). A helical transmembrane segment spans residues 138-158; it reads MLTLILPTLIMFALLYWMLIG. Residues 159 to 715 lie on the Cytoplasmic side of the membrane; that stretch reads SQRGQGGSGG…LLDAVNNKFD (557 aa). Residues 167 to 187 are disordered; that stretch reads GGPGGIMSFGRSKAKPADPKQ. 233–240 serves as a coordination point for ATP; sequence GPPGTGKT. His455 is a binding site for Zn(2+). Glu456 is a catalytic residue. His459 and Asp531 together coordinate Zn(2+).

The protein in the central section; belongs to the AAA ATPase family. In the C-terminal section; belongs to the peptidase M41 family. In terms of assembly, homohexamer. Zn(2+) is required as a cofactor.

It localises to the cell membrane. In terms of biological role, acts as a processive, ATP-dependent zinc metallopeptidase for both cytoplasmic and membrane proteins. Plays a role in the quality control of integral membrane proteins. Functionally, can complement an E.coli ftsH disruption mutant. This chain is ATP-dependent zinc metalloprotease FtsH, found in Oenococcus oeni (Leuconostoc oenos).